Consider the following 72-residue polypeptide: Translation initiation factor IF-1 (72 aa).

The S1-like domain occupies 1-72 (MAKEEPIEVE…TRGRIIYRTK (72 aa)).

This sequence belongs to the IF-1 family. Component of the 30S ribosomal translation pre-initiation complex which assembles on the 30S ribosome in the order IF-2 and IF-3, IF-1 and N-formylmethionyl-tRNA(fMet); mRNA recruitment can occur at any time during PIC assembly.

It is found in the cytoplasm. One of the essential components for the initiation of protein synthesis. Stabilizes the binding of IF-2 and IF-3 on the 30S subunit to which N-formylmethionyl-tRNA(fMet) subsequently binds. Helps modulate mRNA selection, yielding the 30S pre-initiation complex (PIC). Upon addition of the 50S ribosomal subunit IF-1, IF-2 and IF-3 are released leaving the mature 70S translation initiation complex. In Syntrophus aciditrophicus (strain SB), this protein is Translation initiation factor IF-1.